The sequence spans 217 residues: ATP-dependent Clp protease proteolytic subunit 3 (217 aa).

The segment covering 1–13 has biased composition (low complexity); the sequence is MSPFTAGPAPART. The interval 1 to 23 is disordered; it reads MSPFTAGPAPARTPRAEEGDTPA. Ser-108 functions as the Nucleophile in the catalytic mechanism. The active site involves His-133.

The protein belongs to the peptidase S14 family. In terms of assembly, fourteen ClpP subunits assemble into 2 heptameric rings which stack back to back to give a disk-like structure with a central cavity, resembling the structure of eukaryotic proteasomes.

The protein resides in the cytoplasm. The catalysed reaction is Hydrolysis of proteins to small peptides in the presence of ATP and magnesium. alpha-casein is the usual test substrate. In the absence of ATP, only oligopeptides shorter than five residues are hydrolyzed (such as succinyl-Leu-Tyr-|-NHMec, and Leu-Tyr-Leu-|-Tyr-Trp, in which cleavage of the -Tyr-|-Leu- and -Tyr-|-Trp bonds also occurs).. Functionally, cleaves peptides in various proteins in a process that requires ATP hydrolysis. Has a chymotrypsin-like activity. Plays a major role in the degradation of misfolded proteins. This chain is ATP-dependent Clp protease proteolytic subunit 3, found in Streptomyces coelicolor (strain ATCC BAA-471 / A3(2) / M145).